A 555-amino-acid polypeptide reads, in one-letter code: Urocanate hydratase (555 aa).

Residues 51-52, Gln129, 175-177, Glu195, 262-266, 272-273, and Tyr321 contribute to the NAD(+) site; these read GG, GMG, QTSAH, and YL. The active site involves Cys409. An NAD(+)-binding site is contributed by Gly491.

Belongs to the urocanase family. NAD(+) serves as cofactor.

Its subcellular location is the cytoplasm. It catalyses the reaction 4-imidazolone-5-propanoate = trans-urocanate + H2O. The protein operates within amino-acid degradation; L-histidine degradation into L-glutamate; N-formimidoyl-L-glutamate from L-histidine: step 2/3. Functionally, catalyzes the conversion of urocanate to 4-imidazolone-5-propionate. In Xanthomonas campestris pv. campestris (strain ATCC 33913 / DSM 3586 / NCPPB 528 / LMG 568 / P 25), this protein is Urocanate hydratase.